Reading from the N-terminus, the 487-residue chain is Ribosome biogenesis protein YTM1 (487 aa).

Positions 13 to 95 (VKVTFTTNEA…ETNLTLQYVR (83 aa)) are ubiquitin-like (UBL) domain. WD repeat units follow at residues 122–161 (SPAGRWSGENFSRGQERILSASYDGLLRIWNASGEVLVTA), 168–206 (GHSASIKAAKFISSTQIASTGMDRSVRVWKYTDPGASGQ), 217–256 (GHRASVDSLEVHGPSKRILTASADGSVALWSASKSSSPEA), 379–419 (GHTN…PASG), and 451–487 (GEGAKVFGVVWDRELGILSGGEDKKVQVNRGRDVVRE). The tract at residues 253–277 (SPEADASLLPNAHTSKRRKVASSVT) is disordered.

Belongs to the WD repeat WDR12/YTM1 family. In terms of assembly, component of the NOP7 complex, composed of ERB1, NOP7 and YTM1. The complex is held together by ERB1, which interacts with NOP7 via its N-terminal domain and with YTM1 via a high-affinity interaction between the seven-bladed beta-propeller domains of the 2 proteins. The NOP7 complex associates with the 66S pre-ribosome. Interacts (via UBL domain) with MDN1 (via VWFA/MIDAS domain).

The protein localises to the nucleus. It localises to the nucleolus. Its subcellular location is the nucleoplasm. Component of the NOP7 complex, which is required for maturation of the 25S and 5.8S ribosomal RNAs and formation of the 60S ribosome. The sequence is that of Ribosome biogenesis protein YTM1 from Podospora anserina (strain S / ATCC MYA-4624 / DSM 980 / FGSC 10383) (Pleurage anserina).